Consider the following 466-residue polypeptide: Cysteine--tRNA ligase (466 aa).

Residue Cys-33 coordinates Zn(2+). Positions 35–45 match the 'HIGH' region motif; the sequence is PTVYDYAHIGN. Zn(2+)-binding residues include Cys-221, His-246, and Glu-250. A 'KMSKS' region motif is present at residues 279–283; it reads KMSKS. Position 282 (Lys-282) interacts with ATP.

This sequence belongs to the class-I aminoacyl-tRNA synthetase family. Monomer. Requires Zn(2+) as cofactor.

The protein resides in the cytoplasm. The catalysed reaction is tRNA(Cys) + L-cysteine + ATP = L-cysteinyl-tRNA(Cys) + AMP + diphosphate. This chain is Cysteine--tRNA ligase, found in Rhizobium meliloti (strain 1021) (Ensifer meliloti).